We begin with the raw amino-acid sequence, 237 residues long: 2,3-bisphosphoglycerate-dependent phosphoglycerate mutase (237 aa).

Substrate contacts are provided by residues 8-15 (RHGQSAWN), 21-22 (TG), Arg-60, 87-90 (ERHY), Lys-98, 114-115 (RR), and 180-181 (GN). His-9 acts as the Tele-phosphohistidine intermediate in catalysis. The Proton donor/acceptor role is filled by Glu-87.

Belongs to the phosphoglycerate mutase family. BPG-dependent PGAM subfamily. In terms of assembly, homodimer.

The catalysed reaction is (2R)-2-phosphoglycerate = (2R)-3-phosphoglycerate. It participates in carbohydrate degradation; glycolysis; pyruvate from D-glyceraldehyde 3-phosphate: step 3/5. Its function is as follows. Catalyzes the interconversion of 2-phosphoglycerate and 3-phosphoglycerate. This Hyphomonas neptunium (strain ATCC 15444) protein is 2,3-bisphosphoglycerate-dependent phosphoglycerate mutase.